We begin with the raw amino-acid sequence, 270 residues long: Phosphatidylglycerol--prolipoprotein diacylglyceryl transferase (270 aa).

A run of 4 helical transmembrane segments spans residues 19–39, 54–74, 92–112, and 116–136; these read FPVY…LWLA, IDLV…YYVI, QGGL…ILFA, and GLSF…GQAI. R138 contributes to the a 1,2-diacyl-sn-glycero-3-phospho-(1'-sn-glycerol) binding site. The next 3 membrane-spanning stretches (helical) occupy residues 178 to 198, 206 to 226, and 236 to 256; these read HPTF…LLAL, GELF…VEGL, and LRIA…FIIV.

It belongs to the Lgt family.

The protein resides in the cell membrane. The enzyme catalyses L-cysteinyl-[prolipoprotein] + a 1,2-diacyl-sn-glycero-3-phospho-(1'-sn-glycerol) = an S-1,2-diacyl-sn-glyceryl-L-cysteinyl-[prolipoprotein] + sn-glycerol 1-phosphate + H(+). The protein operates within protein modification; lipoprotein biosynthesis (diacylglyceryl transfer). In terms of biological role, catalyzes the transfer of the diacylglyceryl group from phosphatidylglycerol to the sulfhydryl group of the N-terminal cysteine of a prolipoprotein, the first step in the formation of mature lipoproteins. In Bacillus mycoides (strain KBAB4) (Bacillus weihenstephanensis), this protein is Phosphatidylglycerol--prolipoprotein diacylglyceryl transferase.